Reading from the N-terminus, the 622-residue chain is Polyprotein p69 (622 aa).

Residues 1 to 248 (MSCLRKPSQS…AARDPLARIG (248 aa)) form the Peptidase C7 domain. Residues Cys162 and His215 each act as for papain-like protease p29 activity in the active site.

Autocatalytically processed.

Its function is as follows. P40 protein is involved in reduction of conidiation of the host. Not necessary for replication. Also involved in reduction of orange pigmentation of the host. Cysteine protease of the peptidase family C7 that contributes to hypovirulence-associated traits like the reduction in conidiation and laccase activity, but not to virulence attenuation. Acts as a suppressor of RNA-mediated gene silencing, also known as post-transcriptional gene silencing (PTGS), a mechanism of viral defense that limits the accumulation of viral RNAs. Enhances viral dsRNA accumulation and virus transmission. Also involved in the reduction in orange pigmentation of the host, an effect independent of the intrinsic protease activity. The chain is Polyprotein p69 from Cryphonectria hypovirus 1 (strain Euro7) (CHV-1/Euro7).